The chain runs to 230 residues: Ribosomal RNA small subunit methyltransferase G (230 aa).

S-adenosyl-L-methionine-binding positions include Gly91, Leu96, 142–143 (VE), and Arg161.

The protein belongs to the methyltransferase superfamily. RNA methyltransferase RsmG family.

Its subcellular location is the cytoplasm. It catalyses the reaction guanosine(527) in 16S rRNA + S-adenosyl-L-methionine = N(7)-methylguanosine(527) in 16S rRNA + S-adenosyl-L-homocysteine. Specifically methylates the N7 position of guanine in position 527 of 16S rRNA. This is Ribosomal RNA small subunit methyltransferase G from Burkholderia pseudomallei (strain K96243).